The following is an 834-amino-acid chain: Enhancer of filamentation 1 (834 aa).

Positions M1 to D505 are required for interaction with ITCH. The 63-residue stretch at Y3–G65 folds into the SH3 domain. Phosphotyrosine; by ABL1 occurs at positions 92, 164, 166, 177, 189, 214, and 223. The tract at residues R102–A229 is interacts strongly with spindle-regulatory protein D1M1. Positions E238–V260 are disordered. Residue Y279 is modified to Phosphotyrosine; by ABL1. The interval A291–A316 is disordered. S296 carries the phosphoserine modification. Positions L306–D315 are enriched in polar residues. Residue Y317 is modified to Phosphotyrosine; by ABL1. 2 disordered regions span residues P328–Q398 and G560–R623. Basic and acidic residues predominate over residues T332–V344. The segment at N351–F834 is interacts with CTTN. The Caspase cleavage related site motif lies at D360 to D363. S369 carries the phosphoserine modification. Low complexity predominate over residues S369–S395. The tract at residues F710–G760 is divergent helix-loop-helix motif. Residues F710–F834 form a required for interaction with PLK1 region. Phosphoserine; by CSNK1D and CSNK1E is present on S780. Residue T804 is modified to Phosphothreonine; by CSNK1E.

It belongs to the CAS family. As to quaternary structure, homodimer. Forms heterodimers with BCAR1/p130cas. Forms complexes with PTK2B/RAFTK, adapter protein CRKL and LYN kinase. Part of a complex composed of NEDD9, AURKA and CTTN; within the complex NEDD9 acts as a scaffold protein and is required for complex formation. Part of a ternary complex composed of SMAD3, ITCH/AIP4 and NEDD9/HEF1; within the complex NEDD9/HEF1 interacts (via N-terminus) with ITCH/AIP4 (via WW domains); the complex mediates ubiquitination and proteasomal degradation of NEDD9/HEF1. Interacts with SMAD3; the interaction promotes NEDD9 ubiquitination and proteasomal degradation. Interacts with ID2. Interacts with CTTN (via N-terminus). Interacts with MICAL. Interacts with TXNL4/DIM1. Interacts with BCAR3 (via Ras-GEF domain). Interacts with SH2D3C isoform 1 and isoform 2. Interacts with ECT2. Interacts with PTPN11/SHP-2 (via SH2 domains); the interaction is enhanced when NEDD9/CAS-L is tyrosine phosphorylated. Interacts (via C-terminus) with PLK1 (via polo box domains). Interacts with NKX2-5. Interacts with SMAD3; the interaction is inhibited by oxidation of NEDD9. Interacts with NEDD9/HEF1; interaction is induced by CXCL12 promotion of ABL-mediated phosphorylation of NEDD9/HEF1. Interacts (via SH3 domain) with PTK2/FAK. Interacts with FYN; in the presence of PTK2. Interacts with INPPL1/SHIP2. In terms of processing, cell cycle-regulated processing produces four isoforms: p115, p105, p65, and p55. Isoform p115 arises from p105 phosphorylation and appears later in the cell cycle. Isoform p55 arises from p105 as a result of cleavage at a caspase cleavage-related site and it appears specifically at mitosis. The p65 isoform is poorly detected. Polyubiquitinated by ITCH/AIP4, leading to proteasomal degradation. Post-translationally, PTK2/FAK1 phosphorylates the protein at the YDYVHL motif (conserved among all cas proteins) following integrin stimulation. The SRC family kinases (FYN, SRC, LCK and CRK) are recruited to the phosphorylated sites and can phosphorylate other tyrosine residues. Ligation of either integrin beta-1 or B-cell antigen receptor on tonsillar B-cells and B-cell lines promotes tyrosine phosphorylation and both integrin and BCR-mediated tyrosine phosphorylation requires an intact actin network. Phosphorylation is required to recruit NEDD9 to T-cell receptor microclusters at the periphery of newly formed immunological synapses. In fibroblasts transformation with oncogene v-ABL results in an increase in tyrosine phosphorylation. Transiently phosphorylated following CD3 cross-linking and this phosphorylated form binds to CRKL and C3G. A mutant lacking the SH3 domain is phosphorylated upon CD3 cross-linking but not upon integrin beta-1 cross-linking. Tyrosine phosphorylation occurs upon stimulation of the G-protein coupled C1a calcitonin receptor. Calcitonin-stimulated tyrosine phosphorylation is mediated by calcium- and protein kinase C-dependent mechanisms and requires the integrity of the actin cytoskeleton. Phosphorylation at Ser-369 induces proteasomal degradation. Phosphorylated by LYN. Phosphorylation at Ser-780 by CSNK1D or CSNK1E, or phosphorylation of Thr-804 by CSNK1E enhances the interaction of NEDD9 with PLK1. As to expression, expressed in B-cells (at protein level). Expressed in the respiratory epithelium of the main bronchi to the bronchioles in the lungs (at protein level). High levels detected in kidney, lung, and placenta. Expressed in lymphocytes.

It localises to the cytoplasm. It is found in the cell cortex. Its subcellular location is the nucleus. The protein localises to the golgi apparatus. The protein resides in the cell projection. It localises to the lamellipodium. It is found in the cell junction. Its subcellular location is the focal adhesion. The protein localises to the cytoskeleton. The protein resides in the spindle pole. It localises to the cilium. It is found in the cilium basal body. Its subcellular location is the basolateral cell membrane. The protein localises to the spindle. Its function is as follows. Scaffolding protein which plays a central coordinating role for tyrosine-kinase-based signaling related to cell adhesion. As a focal adhesion protein, plays a role in embryonic fibroblast migration. May play an important role in integrin beta-1 or B cell antigen receptor (BCR) mediated signaling in B- and T-cells. Integrin beta-1 stimulation leads to recruitment of various proteins including CRKL and SHPTP2 to the tyrosine phosphorylated form. Promotes adhesion and migration of lymphocytes; as a result required for the correct migration of lymphocytes to the spleen and other secondary lymphoid organs. Plays a role in the organization of T-cell F-actin cortical cytoskeleton and the centralization of T-cell receptor microclusters at the immunological synapse. Negatively regulates cilia outgrowth in polarized cysts. Modulates cilia disassembly via activation of AURKA-mediated phosphorylation of HDAC6 and subsequent deacetylation of alpha-tubulin. Positively regulates RANKL-induced osteoclastogenesis. Required for the maintenance of hippocampal dendritic spines in the dentate gyrus and CA1 regions, thereby involved in spatial learning and memory. This is Enhancer of filamentation 1 from Homo sapiens (Human).